A 1117-amino-acid chain; its full sequence is Sodium-driven chloride bicarbonate exchanger (1117 aa).

Disordered stretches follow at residues 1–23 (MEIK…EEAV) and 58–97 (GRKS…TPSQ). The Cytoplasmic portion of the chain corresponds to 1-508 (MEIKDQGAQM…DFRDAFSLQC (508 aa)). Basic residues predominate over residues 59-76 (RKSHRRHRHRGHKHRKRD). Serine 89 carries the post-translational modification Phosphoserine. Threonine 94 bears the Phosphothreonine mark. Serine 275 is subject to Phosphoserine. Disordered stretches follow at residues 282–309 (DFSK…KGPP) and 431–476 (WDPS…PELQ). Residues 509–529 (LASFLFLYCACMSPVITFGGL) form a helical membrane-spanning segment. Residues 530–537 (LGEATEGR) lie on the Extracellular side of the membrane. Residues 538–558 (ISAIESLFGASMTGIAYSLFG) form a helical membrane-spanning segment. Residues 559-561 (GQP) lie on the Cytoplasmic side of the membrane. A helical membrane pass occupies residues 562 to 582 (LTILGSTGPVLVFEKILFKFC). The Extracellular segment spans residues 583 to 595 (KEYGLSYLSLRAS). Residues 596–616 (IGLWTATLCIILVATDASSLV) traverse the membrane as a helical segment. The Cytoplasmic segment spans residues 617 to 625 (CYITRFTEE). A helical transmembrane segment spans residues 626–646 (AFASLICIIFIYEALEKLFEL). The Extracellular segment spans residues 647–719 (SESYPINMHN…VGRACGHGHP (73 aa)). 3 N-linked (GlcNAc...) asparagine glycosylation sites follow: asparagine 676, asparagine 686, and asparagine 696. The chain crosses the membrane as a helical span at residues 720-740 (YVPDVLFWSVILFFSTVTMSA). Over 741 to 761 (TLKQFKTSRYFPTKVRSIVSD) the chain is Cytoplasmic. A helical membrane pass occupies residues 762-782 (FAVFLTILCMVLIDYAIGIPS). The Extracellular segment spans residues 783–808 (PKLQVPSVFKPTRDDRGWFVTPLGPN). A helical membrane pass occupies residues 809 to 829 (PWWTIIAAIIPALLCTILIFM). Residues 830–854 (DQQITAVIINRKEHKLKKGCGYHLD) are Cytoplasmic-facing. The chain crosses the membrane as a helical span at residues 855 to 875 (LLMVAVMLGVCSIMGLPWFVA). Over 876-911 (ATVLSITHVNSLKLESECSAPGEQPKFLGIREQRVT) the chain is Extracellular. Residues 912 to 932 (GLMIFILMGSSVFMTSILKFI) form a helical membrane-spanning segment. Over 933–934 (PM) the chain is Cytoplasmic. A helical membrane pass occupies residues 935 to 955 (PVLYGVFLYMGASSLKGIQLF). Residues 956-997 (DRIKLFWMPAKHQPDFIYLRHVPLRKVHLFTVIQMSCLGLLW) lie on the Extracellular side of the membrane. The helical transmembrane segment at 998–1018 (IIKVSRAAIVFPMMVLALVFV) threads the bilayer. At 1019 to 1117 (RKLMDFLFTK…SRFPSKSSPS (99 aa)) the chain is on the cytoplasmic side. 2 positions are modified to phosphoserine: serine 1056 and serine 1084.

Belongs to the anion exchanger (TC 2.A.31) family. N-glycosylated. As to expression, in the brain, detected in cerebral cortex, subcortex, cerebellum, hippocampus and medulla (at protein level). Expressed in neurons but not in astrocytes (at protein level). Isoforms starting with Met-Glu-Ile-Lys are found predominantly in the brain with lower levels in the eye while isoforms starting with Met-Cys-Asp-Leu are most abundant in the kidney with lower levels in the duodenum, jejunum and ileum (at protein level). In the kidney, isoforms starting with Met-Cys-Asp-Leu are primarily expressed in the cortex, the outer stripe of the outer medulla and the inner stripe of the outer medulla (ISOM) but are not detectable in the inner medulla (IM) while isoforms starting with Met-Glu-Ile-Lys are predominantly expressed in the ISOM and IM. Expressed in the brain, in the hippocampus as well as in dentate gyrus, cortical layers, cerebellum, olfactory bulb and in the epithelial cells of the choroid plexus. Detected in pituitary, testis, kidney and ileum. Detected also in spleen and lung. In terms of tissue distribution, mainly expressed in the jejenum (at protein level).

The protein resides in the basolateral cell membrane. It localises to the apical cell membrane. Its subcellular location is the cell projection. It is found in the dendrite. The protein localises to the axon. The protein resides in the perikaryon. It localises to the presynapse. Its subcellular location is the postsynapse. The catalysed reaction is 2 hydrogencarbonate(out) + chloride(in) + Na(+)(out) = 2 hydrogencarbonate(in) + chloride(out) + Na(+)(in). In terms of biological role, sodium/bicarbonate cotransporter which plays an important role in regulating intracellular pH. Has been shown to act as a sodium/bicarbonate cotransporter in exchange for intracellular chloride. Has also been shown to act as a sodium/biocarbonate cotransporter which does not couple net influx of bicarbonate to net efflux of chloride, with the observed chloride efflux being due to chloride self-exchange. Controls neuronal pH and may contribute to the secretion of cerebrospinal fluid. Acting on presynaptic intracellular pH, it promotes GABA release, reduces the excitability of CA1 pyramidal neurons, and modulates short-term synaptic plasticity. Required in retinal cells to maintain normal pH which is necessary for normal vision. In the kidney, likely to mediate bicarbonate reclamation in the apical membrane of the proximal tubules. Functionally, sodium/bicarbonate cotransporter which mediates cotransport of sodium and bicarbonate in association with an efflux of intracellular chloride and is involved in NaCl absorption in the small intestine. This Rattus norvegicus (Rat) protein is Sodium-driven chloride bicarbonate exchanger.